A 136-amino-acid polypeptide reads, in one-letter code: Large-conductance mechanosensitive channel (136 aa).

2 helical membrane passes run 9–29 and 79–99; these read AFAS…GAAF and IQTI…VKAI.

Belongs to the MscL family. As to quaternary structure, homopentamer.

It localises to the cell inner membrane. Functionally, channel that opens in response to stretch forces in the membrane lipid bilayer. May participate in the regulation of osmotic pressure changes within the cell. The protein is Large-conductance mechanosensitive channel of Shewanella baltica (strain OS223).